The primary structure comprises 250 residues: Ribosomal RNA small subunit methyltransferase J (250 aa).

Residues 101 to 102, 117 to 118, 153 to 154, and Asp-171 each bind S-adenosyl-L-methionine; these read RD, ER, and SS.

The protein belongs to the methyltransferase superfamily. RsmJ family.

The protein localises to the cytoplasm. The catalysed reaction is guanosine(1516) in 16S rRNA + S-adenosyl-L-methionine = N(2)-methylguanosine(1516) in 16S rRNA + S-adenosyl-L-homocysteine + H(+). Its function is as follows. Specifically methylates the guanosine in position 1516 of 16S rRNA. The protein is Ribosomal RNA small subunit methyltransferase J of Escherichia fergusonii (strain ATCC 35469 / DSM 13698 / CCUG 18766 / IAM 14443 / JCM 21226 / LMG 7866 / NBRC 102419 / NCTC 12128 / CDC 0568-73).